The sequence spans 399 residues: Forkhead box protein Q1 (399 aa).

Residues 1-112 (MKLEVFAPRA…EGARSKPYTR (112 aa)) form a disordered region. The segment covering 32-54 (LSAAGDDSLGSDGDCAANSPAAG) has biased composition (low complexity). Residues 55–66 (SGAGDLEGGGGE) show a composition bias toward gly residues. Residues 114-205 (PKPPYSYIAL…SEYTFADGVF (92 aa)) constitute a DNA-binding region (fork-head). The disordered stretch occupies residues 211–263 (RLSHRTTVSASGYGGGSPPGPAGTPQPAPTAGSSPIARSPARQEEGSSPASKF). Pro residues predominate over residues 228 to 238 (PPGPAGTPQPA).

It is found in the nucleus. Plays a role in hair follicle differentiation. The polypeptide is Forkhead box protein Q1 (Foxq1) (Rattus norvegicus (Rat)).